Reading from the N-terminus, the 256-residue chain is Venom allergen-1 (256 aa).

The signal sequence occupies residues 1–21; sequence MAFNGIALLITATIFIGSCYA. In terms of domain architecture, SCP spans 65–211; sequence LNTHNKLRAE…MINYYLVCNY (147 aa). Asparagine 146 and asparagine 210 each carry an N-linked (GlcNAc...) asparagine glycan.

Belongs to the CRISP family.

The protein localises to the secreted. Functionally, activates autophagy in human monocytic cells, dendritic cells and macrophages. (Microbial infection) Promotes Zika virus replication in human dendritic cells and macrophages. Facilitates Zika virus transmission from infected mosquitoes to the host in mouse model. This Aedes albopictus (Asian tiger mosquito) protein is Venom allergen-1.